Here is a 777-residue protein sequence, read N- to C-terminus: MRNHRTSIFVVLSLVIILNGQSGFLPRAGAESKVHIVYLGEKQHDDPEFVTESHHRMLWSLLGSKEEAHGSMVHSFRHGFSGFAAKLTESQAKKIADLPEVVHVIPDRFYKPATTRTWDYLGLSPTNPKNLLNQTNMGEQMIIGIIDSGVWPESEVFNDNEIGPVPSHWKGGCESGEDFNSSHCNKKLIGAKYFINAFLATHESFNSSESLDFISPRGYNGHGTHVATIAGGSYVPNTSYKGLAGGTVRGGAPRARIAVYKTCWYLDLDIAACSSADILKAMDEAIHDGVDVLSLSLGFEPLYPETDVRDGIATGAFHAVLKGITVVCAAGNAGPAAQTVGNTAPWILTVAATTLDRSFVTPMTLGNNKVILGQAIYTGTEVGFTSLVYPENPGNSNESFSGTCERLLINSNRTMAGKVVLCFTESPYSISVTRAAHYVKRAGGLGVIIAGQPGNVLRPCLDDFPCVAVDYELGTYILFYIRSNGSPVVKIQPSRTLIGQPVGTKVASFSSRGPNPISAAILKPDIAAPGVSILAATTTNTTFNDRGFIFLSGTSMATPTISGIVALLKALHPDWSPAAIRSAIVTTAWRTDPFGEQIFAEGSPRKPADPFDYGGGLVNPEKATKPGLVYDLGLEDYVLYMCSVGYNETSISQLVGKGTVCSYPKPSVLDFNLPSITIPNLKEEVTLPRTLTNVGPLESVYRVAVEPPLGTQVTVTPETLVFNSTTKRVSFKVSVSTTHKINTGYYFGSLTWSDSLHNVTIPLSVRTQLLPYYYDEN.

The first 22 residues, M1 to S22, serve as a signal peptide directing secretion. Residues G23 to A113 constitute a propeptide, activation peptide. The region spanning V34–K111 is the Inhibitor I9 domain. Residues T117 to T624 form the Peptidase S8 domain. N-linked (GlcNAc...) asparagine glycosylation is present at N133. Catalysis depends on D147, which acts as the Charge relay system. N180 and N206 each carry an N-linked (GlcNAc...) asparagine glycan. H222 serves as the catalytic Charge relay system. N237, N397, N412, and N540 each carry an N-linked (GlcNAc...) asparagine glycan. A PA domain is found at S386–I481. S555 (charge relay system) is an active-site residue. N-linked (GlcNAc...) asparagine glycans are attached at residues N647, N723, and N758.

This sequence belongs to the peptidase S8 family.

It is found in the secreted. This Arabidopsis thaliana (Mouse-ear cress) protein is Subtilisin-like protease SBT3.7.